We begin with the raw amino-acid sequence, 162 residues long: NAD(P)H-quinone oxidoreductase subunit N (162 aa).

Belongs to the complex I NdhN subunit family. As to quaternary structure, NDH-1 can be composed of about 15 different subunits; different subcomplexes with different compositions have been identified which probably have different functions.

The protein localises to the cellular thylakoid membrane. The enzyme catalyses a plastoquinone + NADH + (n+1) H(+)(in) = a plastoquinol + NAD(+) + n H(+)(out). It carries out the reaction a plastoquinone + NADPH + (n+1) H(+)(in) = a plastoquinol + NADP(+) + n H(+)(out). In terms of biological role, NDH-1 shuttles electrons from an unknown electron donor, via FMN and iron-sulfur (Fe-S) centers, to quinones in the respiratory and/or the photosynthetic chain. The immediate electron acceptor for the enzyme in this species is believed to be plastoquinone. Couples the redox reaction to proton translocation, and thus conserves the redox energy in a proton gradient. Cyanobacterial NDH-1 also plays a role in inorganic carbon-concentration. This is NAD(P)H-quinone oxidoreductase subunit N from Trichormus variabilis (strain ATCC 29413 / PCC 7937) (Anabaena variabilis).